Consider the following 442-residue polypeptide: Tubulin beta chain (442 aa).

Residues Q11, E69, S138, G142, T143, G144, N204, and N226 each contribute to the GTP site. E69 lines the Mg(2+) pocket. The interval 421–442 is disordered; sequence EYQQYQDATAEDEEEMDEEQME. Over residues 429–442 the composition is skewed to acidic residues; the sequence is TAEDEEEMDEEQME.

This sequence belongs to the tubulin family. In terms of assembly, dimer of alpha and beta chains. A typical microtubule is a hollow water-filled tube with an outer diameter of 25 nm and an inner diameter of 15 nM. Alpha-beta heterodimers associate head-to-tail to form protofilaments running lengthwise along the microtubule wall with the beta-tubulin subunit facing the microtubule plus end conferring a structural polarity. Microtubules usually have 13 protofilaments but different protofilament numbers can be found in some organisms and specialized cells. Requires Mg(2+) as cofactor.

It localises to the cytoplasm. Its subcellular location is the cytoskeleton. Tubulin is the major constituent of microtubules, a cylinder consisting of laterally associated linear protofilaments composed of alpha- and beta-tubulin heterodimers. Microtubules grow by the addition of GTP-tubulin dimers to the microtubule end, where a stabilizing cap forms. Below the cap, tubulin dimers are in GDP-bound state, owing to GTPase activity of alpha-tubulin. The protein is Tubulin beta chain (TUBB1) of Stylonychia lemnae (Ciliate).